The sequence spans 183 residues: Efficient mitochondria targeting-associated protein 19 (183 aa).

Over 1–25 the chain is Cytoplasmic; that stretch reads MKVVSLRRIYSSEIYKLPTTRLHMD. The region spanning 24-156 is the EXPERA domain; that stretch reads MDTLYYYYFV…PYLAIPLWMA (133 aa). Residues 26–46 form a helical membrane-spanning segment; the sequence is TLYYYYFVSHLAAALFVDLPI. Over 47–81 the chain is Lumenal; the sequence is TEWLGGSLSCLSGLRRFYLSTYEDPILLIPAPWKT. A helical transmembrane segment spans residues 82 to 102; the sequence is ALFSSELFFQVPFFIWVSLRL. The Cytoplasmic portion of the chain corresponds to 103–110; the sequence is RKKARDPV. Residues 111-131 form a helical membrane-spanning segment; the sequence is LWVAILIYGVHAFTTTWCCMF. Residues 132-138 lie on the Lumenal side of the membrane; sequence ELFAEKK. Residues 139-159 form a helical membrane-spanning segment; that stretch reads WMIMSFYFPYLAIPLWMAIDM. Residues 160-183 are Cytoplasmic-facing; the sequence is GGRLVKSCHAAKSGPSSTITSKSD.

It belongs to the TMEM97/sigma-2 receptor family.

It is found in the endoplasmic reticulum membrane. In terms of biological role, part of an import route for newly synthesized mitochondrial proteins termed the ER-SURF pathway (ER surface-mediated protein targeting), which retrieves mitochondrial precursor proteins from the ER surface and reroutes them to mitochondria for efficient mitochondrial import. Acts as a quality control factor in the ER, promoting the proteolytic degradation of nonproductive and extramitochondrial precursor proteins in the ER membrane thus removing them from the ER surface. This is Efficient mitochondria targeting-associated protein 19 (ema19) from Schizosaccharomyces pombe (strain 972 / ATCC 24843) (Fission yeast).